A 31-amino-acid polypeptide reads, in one-letter code: Cuticle protein 54 (31 aa).

2 tandem repeats follow at residues Ala7–Ala10 and Ala13–Ile17.

Component of the cuticle of migratory locust which contains more than 100 different structural proteins. The polypeptide is Cuticle protein 54 (Locusta migratoria (Migratory locust)).